We begin with the raw amino-acid sequence, 451 residues long: Epi-neemfruitin B 7-O-acetyltransferse L7AT (451 aa).

Catalysis depends on proton acceptor residues H165 and D384.

Belongs to the plant acyltransferase family. As to quaternary structure, monomer. Mainly expressed in petioles and, to a lower extent, in roots.

The catalysed reaction is epi-neemfruitin B + acetyl-CoA = 7-acetyl-epi-neemfruitin B + CoA. Its pathway is secondary metabolite biosynthesis; terpenoid biosynthesis. Its function is as follows. Acetyltransferase involved in the biosynthesis of limonoids triterpene natural products such as azadirachtin, an antifeedant widely used as bioinsecticide, and possessing many medicinal applications including anti-tumoral, anti-malarial, anti-rheumatic, antibacterial, anti-inflammatory, anti-pyretic and diuretic effects. Catalyzes the formation of 7-acetyl-epi-neemfruitin B from epi-neemfruitin B. This Melia azedarach (Chinaberry tree) protein is Epi-neemfruitin B 7-O-acetyltransferse L7AT.